The following is a 161-amino-acid chain: MTESQQQPVFVIEKIYVKDLSLEIPHAPRIFLEREAPEINFQLATSHNAVDGEIHEVVVTATVTARLKEKDQVMFLVEAHQTGIFRIGNVPGDEVEPVLSVLCPNILFPYLRETISDTVTRAGFPPVILNPVNFEAIYHQKKQQETAGEQPDQPADTITRH.

Residues 141–161 are disordered; sequence KKQQETAGEQPDQPADTITRH.

Belongs to the SecB family. Homotetramer, a dimer of dimers. One homotetramer interacts with 1 SecA dimer.

The protein resides in the cytoplasm. Its function is as follows. One of the proteins required for the normal export of preproteins out of the cell cytoplasm. It is a molecular chaperone that binds to a subset of precursor proteins, maintaining them in a translocation-competent state. It also specifically binds to its receptor SecA. In Nitrosomonas europaea (strain ATCC 19718 / CIP 103999 / KCTC 2705 / NBRC 14298), this protein is Protein-export protein SecB.